We begin with the raw amino-acid sequence, 581 residues long: Proline--tRNA ligase (581 aa).

The protein belongs to the class-II aminoacyl-tRNA synthetase family. ProS type 1 subfamily. As to quaternary structure, homodimer.

The protein localises to the cytoplasm. The catalysed reaction is tRNA(Pro) + L-proline + ATP = L-prolyl-tRNA(Pro) + AMP + diphosphate. Functionally, catalyzes the attachment of proline to tRNA(Pro) in a two-step reaction: proline is first activated by ATP to form Pro-AMP and then transferred to the acceptor end of tRNA(Pro). As ProRS can inadvertently accommodate and process non-cognate amino acids such as alanine and cysteine, to avoid such errors it has two additional distinct editing activities against alanine. One activity is designated as 'pretransfer' editing and involves the tRNA(Pro)-independent hydrolysis of activated Ala-AMP. The other activity is designated 'posttransfer' editing and involves deacylation of mischarged Ala-tRNA(Pro). The misacylated Cys-tRNA(Pro) is not edited by ProRS. This chain is Proline--tRNA ligase, found in Paracidovorax citrulli (strain AAC00-1) (Acidovorax citrulli).